The chain runs to 84 residues: Cell division topological specificity factor (84 aa).

Belongs to the MinE family.

In terms of biological role, prevents the cell division inhibition by proteins MinC and MinD at internal division sites while permitting inhibition at polar sites. This ensures cell division at the proper site by restricting the formation of a division septum at the midpoint of the long axis of the cell. In Paraburkholderia phymatum (strain DSM 17167 / CIP 108236 / LMG 21445 / STM815) (Burkholderia phymatum), this protein is Cell division topological specificity factor.